We begin with the raw amino-acid sequence, 66 residues long: ATP synthase F(0) complex subunit 8 (66 aa).

A helical membrane pass occupies residues 8–24 (TWLTMILSMFLTLFIIF). At Lys54 the chain carries N6-acetyllysine; alternate. Lys54 is subject to N6-succinyllysine; alternate. N6-acetyllysine is present on Lys57.

It belongs to the ATPase protein 8 family. In terms of assembly, component of the ATP synthase complex composed at least of ATP5F1A/subunit alpha, ATP5F1B/subunit beta, ATP5MC1/subunit c (homooctomer), MT-ATP6/subunit a, MT-ATP8/subunit 8, ATP5ME/subunit e, ATP5MF/subunit f, ATP5MG/subunit g, ATP5MK/subunit k, ATP5MJ/subunit j, ATP5F1C/subunit gamma, ATP5F1D/subunit delta, ATP5F1E/subunit epsilon, ATP5PF/subunit F6, ATP5PB/subunit b, ATP5PD/subunit d, ATP5PO/subunit OSCP. ATP synthase complex consists of a soluble F(1) head domain (subunits alpha(3) and beta(3)) - the catalytic core - and a membrane F(0) domain - the membrane proton channel (subunits c, a, 8, e, f, g, k and j). These two domains are linked by a central stalk (subunits gamma, delta, and epsilon) rotating inside the F1 region and a stationary peripheral stalk (subunits F6, b, d, and OSCP). Interacts with PRICKLE3.

The protein resides in the mitochondrion membrane. Its function is as follows. Subunit 8, of the mitochondrial membrane ATP synthase complex (F(1)F(0) ATP synthase or Complex V) that produces ATP from ADP in the presence of a proton gradient across the membrane which is generated by electron transport complexes of the respiratory chain. ATP synthase complex consist of a soluble F(1) head domain - the catalytic core - and a membrane F(1) domain - the membrane proton channel. These two domains are linked by a central stalk rotating inside the F(1) region and a stationary peripheral stalk. During catalysis, ATP synthesis in the catalytic domain of F(1) is coupled via a rotary mechanism of the central stalk subunits to proton translocation. In vivo, can only synthesize ATP although its ATP hydrolase activity can be activated artificially in vitro. Part of the complex F(0) domain. In Bos mutus grunniens (Wild yak), this protein is ATP synthase F(0) complex subunit 8.